A 137-amino-acid chain; its full sequence is uncharacterized protein (137 aa).

Positions 31–83 are disordered; sequence PASPINDKEKDKAGGRLPSGSEPRARAFCEAGADGEQGDPSPADTIKANQGHI.

This is an uncharacterized protein from Homo sapiens (Human).